The following is a 262-amino-acid chain: Tryptophan synthase alpha chain (262 aa).

Residues E49 and D60 each act as proton acceptor in the active site.

Belongs to the TrpA family. Tetramer of two alpha and two beta chains.

The catalysed reaction is (1S,2R)-1-C-(indol-3-yl)glycerol 3-phosphate + L-serine = D-glyceraldehyde 3-phosphate + L-tryptophan + H2O. It functions in the pathway amino-acid biosynthesis; L-tryptophan biosynthesis; L-tryptophan from chorismate: step 5/5. The alpha subunit is responsible for the aldol cleavage of indoleglycerol phosphate to indole and glyceraldehyde 3-phosphate. This is Tryptophan synthase alpha chain from Caldanaerobacter subterraneus subsp. tengcongensis (strain DSM 15242 / JCM 11007 / NBRC 100824 / MB4) (Thermoanaerobacter tengcongensis).